Here is a 132-residue protein sequence, read N- to C-terminus: uncharacterized protein (132 aa).

Functionally, the presence of the two linear plasmids, termed pGKL1 and pGKL2, in strains of Kluyveromyces lactis confers the killer phenotype to the host cell, by promoting the secretion of a toxin able to inhibit the growth of sensitive strains. This is an uncharacterized protein from Kluyveromyces lactis (strain ATCC 8585 / CBS 2359 / DSM 70799 / NBRC 1267 / NRRL Y-1140 / WM37) (Yeast).